The following is a 216-amino-acid chain: Thymidine kinase (216 aa).

ATP-binding positions include Gly9–Ser16 and Asp86–Gln89. Residue Glu87 is the Proton acceptor of the active site.

It belongs to the thymidine kinase family. As to quaternary structure, homotetramer.

The protein resides in the cytoplasm. The enzyme catalyses thymidine + ATP = dTMP + ADP + H(+). The sequence is that of Thymidine kinase from Streptomyces coelicolor (strain ATCC BAA-471 / A3(2) / M145).